The chain runs to 318 residues: MAKELKGPGFHFDVHTDLRADQKAEVLIEALPWLEEFAGQRIVIKYGGNAMIDDHLKACFAEDMVFLRQVGLHPVVVHGGGPQISQMLKALGIKSEFKGGLRVTTPEAMDVVRMVLTGKVSRELVGLINAHGPFAVGLSGEDGALFSAMQRKPVIDGKPTDIGLVGDVVSVDASAVEDLINAGRIPVVSSVAPNEDDATEVLNVNADSAAAALAAALGASKLVVLTDVDGLYADWPDRDSLIGRIGVENLRDMLPDLESGMRPKMEACVRAIDGGVPRAHIIDGRKPHSILNEIFTTDGIGTMVVPEDGIEMRSSYGN.

Substrate is bound by residues 80-81 (GG), R102, and N203.

It belongs to the acetylglutamate kinase family. ArgB subfamily.

The protein localises to the cytoplasm. The catalysed reaction is N-acetyl-L-glutamate + ATP = N-acetyl-L-glutamyl 5-phosphate + ADP. Its pathway is amino-acid biosynthesis; L-arginine biosynthesis; N(2)-acetyl-L-ornithine from L-glutamate: step 2/4. Catalyzes the ATP-dependent phosphorylation of N-acetyl-L-glutamate. In Bifidobacterium adolescentis (strain ATCC 15703 / DSM 20083 / NCTC 11814 / E194a), this protein is Acetylglutamate kinase.